The primary structure comprises 826 residues: Hyaluronate lyase HylA (826 aa).

The segment at residues 1–36 (MFDIPYQVPSRRTFLSLSALSAIAIAASPEMPDAFA) is a signal peptide (tat-type signal). Active-site residues include His-276, Tyr-285, and Arg-339. The tract at residues 800–826 (LSPALPKPTKPSLRASSYPLGLPHTSS) is disordered.

It belongs to the polysaccharide lyase 8 family. Post-translationally, predicted to be exported by the Tat system. The position of the signal peptide cleavage has not been experimentally proven.

The protein localises to the secreted. It carries out the reaction [hyaluronan](n) = n 3-(4-deoxy-beta-D-gluc-4-enuronosyl)-N-acetyl-D-glucosamine + H2O. In terms of biological role, degrades hyaluronic acid (HA) into large-sized HA oligosaccharides, including tetrasaccharide HA (HA-4), hexasaccharide HA (HA-6) and higher molecular weight HA, and to a lesser extent into HA disaccharides (HA-2). Involved in the pathogenesis of acne. HA degradation products induce secretion of proinflammatory cytokines (IL-6, IL-8 and TNF-alpha) from human HaCaT keratinocyte cell line and from mouse bone marrow derived macrophages (BMDMs). Produced HA fragments also direct robust TLR2-dependent inflammation in the mouse model of acne. The protein is Hyaluronate lyase HylA of Cutibacterium acnes (Propionibacterium acnes).